Consider the following 474-residue polypeptide: Ribulose bisphosphate carboxylase large chain (474 aa).

Residues Asn-122 and Thr-172 each contribute to the substrate site. Catalysis depends on Lys-174, which acts as the Proton acceptor. Lys-176 contacts substrate. 3 residues coordinate Mg(2+): Lys-200, Asp-202, and Glu-203. Lys-200 carries the N6-carboxylysine modification. The active-site Proton acceptor is His-293. The substrate site is built by Arg-294, His-326, and Ser-378.

This sequence belongs to the RuBisCO large chain family. Type I subfamily. Heterohexadecamer of 8 large chains and 8 small chains; disulfide-linked. The disulfide link is formed within the large subunit homodimers. Mg(2+) serves as cofactor. Post-translationally, the disulfide bond which can form in the large chain dimeric partners within the hexadecamer appears to be associated with oxidative stress and protein turnover.

The protein resides in the carboxysome. The catalysed reaction is 2 (2R)-3-phosphoglycerate + 2 H(+) = D-ribulose 1,5-bisphosphate + CO2 + H2O. It carries out the reaction D-ribulose 1,5-bisphosphate + O2 = 2-phosphoglycolate + (2R)-3-phosphoglycerate + 2 H(+). RuBisCO catalyzes two reactions: the carboxylation of D-ribulose 1,5-bisphosphate, the primary event in carbon dioxide fixation, as well as the oxidative fragmentation of the pentose substrate in the photorespiration process. Both reactions occur simultaneously and in competition at the same active site. The chain is Ribulose bisphosphate carboxylase large chain from Synechococcus sp. (strain JA-3-3Ab) (Cyanobacteria bacterium Yellowstone A-Prime).